A 383-amino-acid chain; its full sequence is Cyclin-D4-2 (383 aa).

The span at 51 to 62 shows a compositional bias: gly residues; that stretch reads AAGGGGGSGGGG. Disordered regions lie at residues 51-70, 313-335, and 354-383; these read AAGG…EDMF, QPKP…PESP, and ATIA…KLSR. Positions 323–335 are enriched in low complexity; that stretch reads SASASSSSVPESP.

This sequence belongs to the cyclin family. Cyclin D subfamily.

This Oryza sativa subsp. japonica (Rice) protein is Cyclin-D4-2 (CYCD4-2).